We begin with the raw amino-acid sequence, 2624 residues long: Highly reducing polyketide synthase ALT1 (2624 aa).

In terms of domain architecture, Ketosynthase family 3 (KS3) spans 28–449; that stretch reads VLPLAIVGMG…GSNAHCILES (422 aa). Residue Cys-200 is the For beta-ketoacyl synthase activity of the active site. Positions 289–308 are disordered; it reads VRGTSSNSDGKTPGMSMPSS. Active-site for beta-ketoacyl synthase activity residues include His-335 and His-372. A compositionally biased stretch (polar residues) spans 523 to 544; that stretch reads ESYSNHHTLTETTNPSNNTATN. Positions 523-545 are disordered; the sequence is ESYSNHHTLTETTNPSNNTATNG. Positions 639–945 are malonyl-CoA:ACP transacylase (MAT) domain; that stretch reads VFTGQGAQWA…GYTPAMIRGK (307 aa). Positions 1009–1140 are N-terminal hotdog fold; sequence HELLGSQTLE…GQVRPGRDAH (132 aa). Residues 1009-1301 form a dehydratase (DH) domain region; sequence HELLGSQTLE…LEGGKFSPIE (293 aa). The 298-residue stretch at 1009–1306 folds into the PKS/mFAS DH domain; that stretch reads HELLGSQTLE…FSPIEVDDGI (298 aa). The active-site Proton acceptor; for dehydratase activity is the His-1041. Residues 1157–1306 form a C-terminal hotdog fold region; the sequence is QYPRPVDSLY…FSPIEVDDGI (150 aa). The active-site Proton donor; for dehydratase activity is Asp-1217. Residues 1493-1599 form a methyltransferase (CMet) domain region; the sequence is LEIGAGTGGA…RKLLAPEGYL (107 aa). The segment at 1895-2205 is enoyl reductase (ER) (ER) domain; the sequence is GLLQTLKWVD…KGTHLGKIVV (311 aa). Residues 2230 to 2509 are ketoreductase (KR) domain; it reads TYVLVGGLGG…DSDALRFFIT (280 aa). A Carrier domain is found at 2522-2600; it reads ASLDLVTRTI…GLAKLILDAL (79 aa). Ser-2559 is subject to O-(pantetheine 4'-phosphoryl)serine.

It participates in mycotoxin biosynthesis. Highly reducing polyketide synthase; part of the gene cluster that mediates the biosynthesis of the host-selective toxins (HSTs) AAL-toxins, sphinganine-analog mycotoxins responsible for Alternaria stem canker on tomato by the tomato pathotype. The biosynthesis starts with the polyketide synthase ALT1-catalyzed C-16 carbon chain assembly from one starter acetyl-CoA unit with malonyl-CoA extender units. ALT1 also selectively transfers methyl groups at the first and the third cycle of chain elongation for AAL toxin. The C-16 polyketide chain is released from the enzyme by a nucleophilic attack of a carbanion, which is derived from R-carbon of glycin by decarboxylation, on the carbonyl carbon of polyketide acyl chain. This step is probably catalyzed by a pyridoxal 5'-phosphate-dependent aminoacyl transferase ALT4. The respective functions of the other enzymes encoded by the cluster have still to be elucidated. The sphingosine N-acyltransferase-like protein ALT7 seems not to act as a resistance/self-tolerance factor against the toxin in the toxin biosynthetic gene cluster, contrary to what is expected. The chain is Highly reducing polyketide synthase ALT1 from Alternaria alternata (Alternaria rot fungus).